The primary structure comprises 377 residues: Leukocyte elastase inhibitor (377 aa).

Met-1 bears the N-acetylmethionine mark. Lys-136 bears the N6-acetyllysine mark. Ser-298 bears the Phosphoserine mark. A CARD-binding motif (CBM) region spans residues 349 to 377; sequence EFVADHPFIFFIRHKPSSNILFLGRLSSP.

This sequence belongs to the serpin family. Ov-serpin subfamily. Monomer. Interacts (via C-terminus) with CASP1; CASP4 (via CARD domain) and CASP5; these interactions regulate the activity of inflammatory caspases. Interacts with PRTN3. Interacts with GZMH.

Its subcellular location is the secreted. It localises to the cytoplasm. The protein localises to the cytolytic granule. It is found in the early endosome. Its function is as follows. Neutrophil serine protease inhibitor that plays an essential role in the regulation of the innate immune response, inflammation and cellular homeostasis. Acts primarily to protect the cell from proteases released in the cytoplasm during stress or infection. These proteases are important in killing microbes but when released from granules, these potent enzymes also destroy host proteins and contribute to mortality. Regulates the activity of the neutrophil proteases elastase, cathepsin G, proteinase-3, chymase, chymotrypsin, and kallikrein-3. Also acts as a potent intracellular inhibitor of GZMH by directly blocking its proteolytic activity. During inflammation, limits the activity of inflammatory caspases CASP1, CASP4 and CASP5 by suppressing their caspase-recruitment domain (CARD) oligomerization and enzymatic activation. When secreted, promotes the proliferation of beta-cells via its protease inhibitory function. The protein is Leukocyte elastase inhibitor (SERPINB1) of Bos taurus (Bovine).